We begin with the raw amino-acid sequence, 387 residues long: Eukaryotic translation initiation factor 3 subunit M (387 aa).

Residues 181-340 (LSSKVMIELL…HKVHITSTMH (160 aa)) enclose the PCI domain.

This sequence belongs to the eIF-3 subunit M family. Component of the eukaryotic translation initiation factor 3 (eIF-3) complex. The eIF-3 complex interacts with pix.

Its subcellular location is the cytoplasm. The protein resides in the golgi apparatus. Component of the eukaryotic translation initiation factor 3 (eIF-3) complex, which is involved in protein synthesis of a specialized repertoire of mRNAs and, together with other initiation factors, stimulates binding of mRNA and methionyl-tRNAi to the 40S ribosome. The eIF-3 complex specifically targets and initiates translation of a subset of mRNAs involved in cell proliferation. In Drosophila erecta (Fruit fly), this protein is Eukaryotic translation initiation factor 3 subunit M.